Here is a 224-residue protein sequence, read N- to C-terminus: Uridylate kinase (224 aa).

8-12 (KITGK) lines the ATP pocket. Gly-43 contributes to the UMP binding site. ATP is bound by residues Gly-44 and Arg-48. Residues Asp-66 and 114–120 (LIPGQST) contribute to the UMP site. Positions 140, 146, and 149 each coordinate ATP.

The protein belongs to the UMP kinase family. As to quaternary structure, homohexamer.

It localises to the cytoplasm. It catalyses the reaction UMP + ATP = UDP + ADP. It functions in the pathway pyrimidine metabolism; CTP biosynthesis via de novo pathway; UDP from UMP (UMPK route): step 1/1. Its activity is regulated as follows. Inhibited by UTP. Functionally, catalyzes the reversible phosphorylation of UMP to UDP. The sequence is that of Uridylate kinase from Staphylothermus marinus (strain ATCC 43588 / DSM 3639 / JCM 9404 / F1).